Here is a 26-residue protein sequence, read N- to C-terminus: Dermaseptin-J3 (26 aa).

Valine 26 carries the valine amide modification.

Expressed by the skin glands.

The protein resides in the secreted. Functionally, has antimicrobial activity. The chain is Dermaseptin-J3 from Phasmahyla jandaia (Jandaia leaf frog).